The sequence spans 210 residues: Homeobox protein Rhox5 (210 aa).

The tract at residues 29-117 is disordered; that stretch reads KAEAFLQAGE…KNGKPEDRQM (89 aa). The segment at residues 117–175 is a DNA-binding region (homeobox; atypical); it reads MPLQGSRFAQQRLSELQSILQRTNSFDVPREDLYRLMDTCVARVQNWFKIRRAAARRNR.

It localises to the nucleus. In terms of biological role, transcription factor required for differentiation of embryonic stem cells (ESCs) into primordial germ cells. The sequence is that of Homeobox protein Rhox5 (Rhox5) from Mus minutoides (Southern African pygmy mouse).